Here is a 435-residue protein sequence, read N- to C-terminus: ATP-dependent protease ATPase subunit HslU (435 aa).

Residues Ile18, Gly60–Glu65, Asp248, Glu313, and Arg385 contribute to the ATP site.

The protein belongs to the ClpX chaperone family. HslU subfamily. In terms of assembly, a double ring-shaped homohexamer of HslV is capped on each side by a ring-shaped HslU homohexamer. The assembly of the HslU/HslV complex is dependent on binding of ATP.

It localises to the cytoplasm. ATPase subunit of a proteasome-like degradation complex; this subunit has chaperone activity. The binding of ATP and its subsequent hydrolysis by HslU are essential for unfolding of protein substrates subsequently hydrolyzed by HslV. HslU recognizes the N-terminal part of its protein substrates and unfolds these before they are guided to HslV for hydrolysis. This chain is ATP-dependent protease ATPase subunit HslU, found in Allorhizobium ampelinum (strain ATCC BAA-846 / DSM 112012 / S4) (Agrobacterium vitis (strain S4)).